Here is a 512-residue protein sequence, read N- to C-terminus: mRNA export factor (512 aa).

The tract at residues 1 to 242 is disordered; it reads MATDIDMLID…PVPERKAPSA (242 aa). Residues 5–17 carry the Nuclear export signal motif; sequence IDMLIDLGLDLSD. A phosphoserine; by host mark is found at Ser16 and Ser18. Composition is skewed to acidic residues over residues 16 to 28 and 36 to 55; these read SDSE…LERD and PESD…EDPC. Residues 104–112 form an interaction with host ALYREF region; that stretch reads VWSRLGTRR. A Nuclear localization signal motif is present at residues 110–138; it reads TRRSASPREPHGGKVARIQPPSTKAPHPR. Ser113 is modified (phosphoserine; by host). The span at 135–149 shows a compositional bias: basic residues; that stretch reads PHPRGGRRGRRRGRG. Arg138 carries the post-translational modification Dimethylated arginine; by host. The segment at 138 to 152 is RGG-box; it reads RGGRRGRRRGRGRYG. At Arg148 the chain carries Omega-N-methylarginine; by host. Dimethylated arginine; by host is present on Arg150. The span at 228-240 shows a compositional bias: basic and acidic residues; that stretch reads ADGRAPVPERKAP. Zn(2+) is bound by residues Cys400, His479, Cys483, and Cys488. A CHC2-type zinc finger spans residues 400–488; sequence CYLKARGLCG…HRQECSSRVC (89 aa).

Belongs to the HHV-1 ICP27 protein family. In terms of assembly, interacts with host RBP1; this interaction facilitates the RNA polymerase recruitment to viral transcription sites. Interacts (via the RGG box) with host ALYREF/THOC4; this interaction recruits ALYREF to viral replication compartments and probably directs viral mRNA to the TAP/NFX1 pathway. Interacts (via the RGG box) with host SRPK1; this interaction relocalizes SRPK1 to the nucleus and seems to alter its activity. Interacts with ICP4; this interaction modulates ICP4 DNA-binding activity. Interacts with host NXF1; this interaction allows efficient export of HSV-1 early and late transcripts. Interacts with host IRF3; this interaction inhibits IRF3 phosphorylation and nuclear translocation. Post-translationally, methylated within the RGG box possibly by host PRMT1. When hypomethylated, ICP27 is exported to the cytoplasm earlier and more rapidly. Phosphorylated.

The protein resides in the host cytoplasm. Its subcellular location is the host nucleus. In terms of biological role, multifunctional regulator of the expression of viral genes that contributes to the shutoff of host protein synthesis and mediates nuclear export of viral intronless mRNAs. Also stimulates translation of viral transcripts. Independently, plays a role in the regulation of virion release. Also plays a role in the inhibition of host innate immune response by targeting host IRF3 and thereby preventing production of beta-interferon. Silences the 3' splice site of the host promyelocytic leukemia (PML) intron 7a, thereby switching PML isoforms from PML-II to PML-V. This could be linked to the accelerated mRNA export induced by ICP27 which might not provide sufficient time for PML pre-mRNA to be spliced in the nucleus. Also suppresses splicing of the viral ICP34.5 mRNA, allowing the virus to express a variant form of ICP34.5. The sequence is that of mRNA export factor from Human herpesvirus 2 (strain HG52) (HHV-2).